We begin with the raw amino-acid sequence, 147 residues long: Putative toxin MJ0142 (147 aa).

This sequence belongs to the UPF0332 family.

Its function is as follows. Putative toxin component of a putative type VII toxin-antitoxin (TA) system. Its cognate antitoxin might be MJ0141. The chain is Putative toxin MJ0142 from Methanocaldococcus jannaschii (strain ATCC 43067 / DSM 2661 / JAL-1 / JCM 10045 / NBRC 100440) (Methanococcus jannaschii).